The primary structure comprises 346 residues: Phosphoribosylformylglycinamidine cyclo-ligase (346 aa).

It belongs to the AIR synthase family.

The protein localises to the cytoplasm. It carries out the reaction 2-formamido-N(1)-(5-O-phospho-beta-D-ribosyl)acetamidine + ATP = 5-amino-1-(5-phospho-beta-D-ribosyl)imidazole + ADP + phosphate + H(+). It functions in the pathway purine metabolism; IMP biosynthesis via de novo pathway; 5-amino-1-(5-phospho-D-ribosyl)imidazole from N(2)-formyl-N(1)-(5-phospho-D-ribosyl)glycinamide: step 2/2. This is Phosphoribosylformylglycinamidine cyclo-ligase from Bacillus cereus (strain AH187).